We begin with the raw amino-acid sequence, 261 residues long: MGPIPRSITRTLSRFRTELTSESSPLVIHELKVAKYKVSASLQYLAFLVFLPWGISISFQEGLGPWVTNWWNTGQSKIFFSYLQEENALERFGEIEELFLLERMVEDSSETHSQDLRIEIHRKTIQLVKMYNKDCIQIISHLLTNMICFAISSAYFIMSKKKLTVLNSWIQELFYSLSDTMKAFSIISVTDLCIGFHSTHGWELMIDSISENYGFVHNEQIISGLVPTFPVISDTIFKYWIFRHFNRISPPLVVIYHSMNE.

Helical transmembrane passes span 47 to 67 and 138 to 158; these read FLVFLPWGISISFQEGLGPWV and IISHLLTNMICFAISSAYFIM.

Belongs to the CemA family.

Its subcellular location is the plastid. The protein localises to the chloroplast inner membrane. The enzyme catalyses K(+)(in) + H(+)(out) = K(+)(out) + H(+)(in). Functionally, contributes to K(+)/H(+) antiport activity by supporting proton efflux to control proton extrusion and homeostasis in chloroplasts in a light-dependent manner to modulate photosynthesis. Prevents excessive induction of non-photochemical quenching (NPQ) under continuous-light conditions. Indirectly promotes efficient inorganic carbon uptake into chloroplasts. This is Potassium/proton antiporter CemA from Ginkgo biloba (Ginkgo).